Reading from the N-terminus, the 463-residue chain is Chromosomal replication initiator protein DnaA (463 aa).

Residues 1–83 (MSTNQIILTD…LQLFQHYNNT (83 aa)) form a domain I, interacts with DnaA modulators region. A domain II region spans residues 83–124 (TIKSIEIITKELPGTTQTVIELPTKTFADIGSSELNSENIFS). The segment at 125 to 343 (TLDVRFTFDN…GALNKVIAHS (219 aa)) is domain III, AAA+ region. Residues glycine 171, glycine 173, lysine 174, and threonine 175 each coordinate ATP. The tract at residues 344–463 (NFTLKEITLE…INLLMKILQN (120 aa)) is domain IV, binds dsDNA.

It belongs to the DnaA family. Oligomerizes as a right-handed, spiral filament on DNA at oriC.

It is found in the cytoplasm. In terms of biological role, plays an essential role in the initiation and regulation of chromosomal replication. ATP-DnaA binds to the origin of replication (oriC) to initiate formation of the DNA replication initiation complex once per cell cycle. Binds the DnaA box (a 9 base pair repeat at the origin) and separates the double-stranded (ds)DNA. Forms a right-handed helical filament on oriC DNA; dsDNA binds to the exterior of the filament while single-stranded (ss)DNA is stabiized in the filament's interior. The ATP-DnaA-oriC complex binds and stabilizes one strand of the AT-rich DNA unwinding element (DUE), permitting loading of DNA polymerase. After initiation quickly degrades to an ADP-DnaA complex that is not apt for DNA replication. Binds acidic phospholipids. This chain is Chromosomal replication initiator protein DnaA, found in Rickettsia felis (strain ATCC VR-1525 / URRWXCal2) (Rickettsia azadi).